The sequence spans 287 residues: Eukaryotic translation initiation factor 3 subunit F (287 aa).

Residues 12–142 (VRVHPVVLFQ…IKAYVCVSLG (131 aa)) enclose the MPN domain.

The protein belongs to the eIF-3 subunit F family. As to quaternary structure, component of the eukaryotic translation initiation factor 3 (eIF-3) complex.

It is found in the cytoplasm. Component of the eukaryotic translation initiation factor 3 (eIF-3) complex, which is involved in protein synthesis of a specialized repertoire of mRNAs and, together with other initiation factors, stimulates binding of mRNA and methionyl-tRNAi to the 40S ribosome. The eIF-3 complex specifically targets and initiates translation of a subset of mRNAs involved in cell proliferation. This chain is Eukaryotic translation initiation factor 3 subunit F, found in Anopheles gambiae (African malaria mosquito).